Consider the following 219-residue polypeptide: 7-cyano-7-deazaguanine synthase (219 aa).

Residue 10-20 (FSGGQDSTTCL) coordinates ATP. Positions 188, 197, 200, and 203 each coordinate Zn(2+).

The protein belongs to the QueC family. The cofactor is Zn(2+).

It catalyses the reaction 7-carboxy-7-deazaguanine + NH4(+) + ATP = 7-cyano-7-deazaguanine + ADP + phosphate + H2O + H(+). It participates in purine metabolism; 7-cyano-7-deazaguanine biosynthesis. Functionally, catalyzes the ATP-dependent conversion of 7-carboxy-7-deazaguanine (CDG) to 7-cyano-7-deazaguanine (preQ(0)). This Bacteroides fragilis (strain ATCC 25285 / DSM 2151 / CCUG 4856 / JCM 11019 / LMG 10263 / NCTC 9343 / Onslow / VPI 2553 / EN-2) protein is 7-cyano-7-deazaguanine synthase.